The sequence spans 321 residues: Cytochrome f (321 aa).

Positions 1-35 are cleaved as a signal peptide; the sequence is MQNTNTLNWINKLIYLSISIPIFFLILVTTYPNSV. Heme-binding residues include Tyr38, Cys58, Cys61, and His62. Residues 287–307 traverse the membrane as a helical segment; that stretch reads MEGLILFFISVILAQVFLVLK.

This sequence belongs to the cytochrome f family. The 4 large subunits of the cytochrome b6-f complex are cytochrome b6, subunit IV (17 kDa polypeptide, petD), cytochrome f and the Rieske protein, while the 4 small subunits are PetG, PetL, PetM and PetN. The complex functions as a dimer. Heme is required as a cofactor.

It is found in the plastid. The protein resides in the chloroplast thylakoid membrane. Functionally, component of the cytochrome b6-f complex, which mediates electron transfer between photosystem II (PSII) and photosystem I (PSI), cyclic electron flow around PSI, and state transitions. This Chara vulgaris (Common stonewort) protein is Cytochrome f.